A 143-amino-acid chain; its full sequence is Transcriptional regulator MraZ (143 aa).

2 consecutive SpoVT-AbrB domains span residues 5–47 (EYHH…PIEE) and 76–119 (AMES…SAER).

It belongs to the MraZ family. Forms oligomers.

It is found in the cytoplasm. It localises to the nucleoid. This chain is Transcriptional regulator MraZ, found in Lactobacillus gasseri (strain ATCC 33323 / DSM 20243 / BCRC 14619 / CIP 102991 / JCM 1131 / KCTC 3163 / NCIMB 11718 / NCTC 13722 / AM63).